We begin with the raw amino-acid sequence, 227 residues long: Small ribosomal subunit protein uS3m (227 aa).

It belongs to the universal ribosomal protein uS3 family. As to quaternary structure, component of the mitochondrial small ribosomal subunit (mt-SSU). Mature yeast 74S mitochondrial ribosomes consist of a small (37S) and a large (54S) subunit. The 37S small subunit contains a 15S ribosomal RNA (15S mt-rRNA) and at least 32 different proteins. The 54S large subunit contains a 21S rRNA (21S mt-rRNA) and at least 45 different proteins. uS3m, uS4m and uS5m form the narrow entry site of the mRNA channel.

It is found in the mitochondrion. Functionally, essential for mitochondrial protein synthesis and required for the maturation of small ribosomal subunits. Component of the mitochondrial ribosome (mitoribosome), a dedicated translation machinery responsible for the synthesis of mitochondrial genome-encoded proteins, including at least some of the essential transmembrane subunits of the mitochondrial respiratory chain. The mitoribosomes are attached to the mitochondrial inner membrane and translation products are cotranslationally integrated into the membrane. uS3m is essential for mitochondrial protein synthesis and required for the maturation of small ribosomal subunits. The chain is Small ribosomal subunit protein uS3m (var1) from Schizosaccharomyces pombe (strain 972 / ATCC 24843) (Fission yeast).